Here is a 92-residue protein sequence, read N- to C-terminus: MARSVWKGPFVDGYLLKKAEKVREGGRNEVIKMWSRRSTILPQFVGLTFGVYNGNKHVPVSVSEEMVGHKFGEFAPTRTYYGHGADKKAKRK.

This sequence belongs to the universal ribosomal protein uS19 family.

Functionally, protein S19 forms a complex with S13 that binds strongly to the 16S ribosomal RNA. The polypeptide is Small ribosomal subunit protein uS19 (Sinorhizobium medicae (strain WSM419) (Ensifer medicae)).